The primary structure comprises 103 residues: Co-chaperonin GroES (103 aa).

It belongs to the GroES chaperonin family. Heptamer of 7 subunits arranged in a ring. Interacts with the chaperonin GroEL.

The protein resides in the cytoplasm. In terms of biological role, together with the chaperonin GroEL, plays an essential role in assisting protein folding. The GroEL-GroES system forms a nano-cage that allows encapsulation of the non-native substrate proteins and provides a physical environment optimized to promote and accelerate protein folding. GroES binds to the apical surface of the GroEL ring, thereby capping the opening of the GroEL channel. This is Co-chaperonin GroES from Prochlorococcus marinus (strain SARG / CCMP1375 / SS120).